Here is a 1358-residue protein sequence, read N- to C-terminus: MGNQLAGIAPSQILSVESYFSDIHDFEYDKSLGSTRFFKVARAKHREGLVVVKVFAIQDPTLPLTSYKQELEELKIRLHSAQNCLPFQKAAEKASEKAAMLFRQYVRDNLYDRISTRPFLNNIEKRWIAFQILTAVDQAHKSGVRHGDIKTENVMVTSWNWVLLTDFASFKPTYLPEDNPADFNYFFDTSRRRTCYIAPERFVDGGMFATELEYMRDPSTPLVDLNSNQRARGELKRAMDIFSAGCVIAELFTEGVPLFDLSQLLAYRNGHFFPEQVLNKIEDRSIRDLVTQMINREPEKRLEAEDYLKQQRGNAFPEIFYTFLQPYMAQFAKETFLSADERILVIRKDLGNIIHNLCGHDLPEKAEGESRASGLVVLVSVITSCLQTLKSCDSKLAALELILHLAPRLSVEILLDRITPYLLHFSNDSVPRVRAEALRTLTKVLALVQEVPRNDVNIYPEYILPGIAHLAQDDATIVRLAYAENIALLAETALRFLELVQLKTLNMENEPDNEEVDEATRPNGDYDTELQALHEMVQQKVVTLLSDPENIVKQTLMESGITRLCVFFGRQKANDVLLSHMITFLNDKNDWHLRGAFFDSIVGVAAYVGWQSSSILKPLLQQGLSDAEEFVIVKALNALTCMCQLGLLQKPHVYEFASDIAPFLCHPNLWIRYGAVGFITVVAHQISTADVYCKLMPYLDPYITQPVIQIERKLVLLSVLKEPVSRSIFDYALRSKDIASLFRHLHMRQKKRNGSLLDCPPPEDPTIAQLLKKLLSQGMTEEEEDKLLALKDFMMKSNRAKANAVDQSHLHDSSQKGVIDLAALGITGRQVDLVKTKQEPDEKRARKHVKQDSNVNEEWKSMFGSLEPPNIPQALPKTSDHEVVQPGKPPRSESSAGICVPLSTSPQVSEAAHIPSKKPVIPVVSSTVLPSTYQIRITTCKTELQQLIQQKREQCNAERIAKQMMENAEWESKPPPPGWRPKGLLVAHLHEHKSAVNRIRVSDEHLLFATCSNDGTVKIWNSQKMEGKTTTTRSILTYSRIGGRVKTLTFCQGSHYLAIASDNGAVQLLGIEASKLPKSPKIHPLQSRILDQKEDGCVVDMHHFNSGAQSVLAYATVNGSLVGWDLRSSSNAWTLKHDLKSGLITSFAVDIHQCWLCIGTSSGAMACWDMRFQLPISSHCHPSRARIRRLSMHPLYQSWVIAAVQGNNEVSMWDMETGDRRLTLWASSAPPLSELQPSPHSVHGIYCSPADGNPILLTAGSDMKIRFWDLVSPERSYVVAGSTGSPSVSYYKKIIEGTEVVQEIQNKQKVGPSDDTPRRGPESLPVGHHDIITDIATFQTTQGFIVTASRDGIVKVWK.

Gly-2 carries the N-myristoyl glycine lipid modification. In terms of domain architecture, Protein kinase spans 26-324; sequence FEYDKSLGST…AFPEIFYTFL (299 aa). ATP is bound by residues 32-40 and Lys-53; that span reads LGSTRFFKV. Asp-148 serves as the catalytic Proton acceptor. HEAT repeat units follow at residues 413-450, 458-495, 572-610, and 612-648; these read ILLD…LVQE, IYPE…TALR, KAND…YVGW, and SSSI…LGLL. A phosphoserine mark is found at Ser-808, Ser-813, Ser-853, and Ser-865. WD repeat units lie at residues 991–1030, 1040–1079, 1093–1134, 1139–1178, 1182–1223, and 1237–1278; these read EHKS…GKTT, RIGG…LPKS, KEDG…NAWT, LKSG…PISS, PSRA…RRLT, and PSPH…RSYV. Residues 1307-1326 are disordered; the sequence is KQKVGPSDDTPRRGPESLPV. Basic and acidic residues predominate over residues 1315-1326; the sequence is DTPRRGPESLPV. Thr-1316 carries the phosphothreonine modification. Residues 1327–1358 form a WD 7 repeat; it reads GHHDIITDIATFQTTQGFIVTASRDGIVKVWK.

The protein belongs to the protein kinase superfamily. Ser/Thr protein kinase family. In terms of assembly, component of the PI3K (PI3KC3/PI3K-III/class III phosphatidylinositol 3-kinase) complex the core of which is composed of the catalytic subunit PIK3C3, the regulatory subunit PIK3R4 and BECN1 associating with additional regulatory/auxiliary subunits to form alternative complex forms. Alternative complex forms containing a fourth regulatory subunit in a mutually exclusive manner are PI3K complex I (PI3KC3-C1) containing ATG14, and PI3K complex II (PI3KC3-C2) containing UVRAG. PI3KC3-C1 displays a V-shaped architecture with PIK3R4 serving as a bridge between PIK3C3 and the ATG14:BECN1 subcomplex. Both, PI3KC3-C1 and PI3KC3-C2, can associate with further regulatory subunits, such as RUBCN, SH3GLB1/Bif-1, AMBRA1 and NRBF2. PI3KC3-C1 probably associates with PIK3CB. Interacts with RAB7A in the presence of PIK3C3/VPS34. Interacts with NRBF2. Interacts with ARMC3. It depends on Mn(2+) as a cofactor. Myristoylated. In terms of processing, probably autophosphorylated.

The protein resides in the late endosome. The protein localises to the cytoplasmic vesicle. It is found in the autophagosome. It localises to the membrane. The catalysed reaction is L-seryl-[protein] + ATP = O-phospho-L-seryl-[protein] + ADP + H(+). It carries out the reaction L-threonyl-[protein] + ATP = O-phospho-L-threonyl-[protein] + ADP + H(+). Regulatory subunit of the PI3K complex that mediates formation of phosphatidylinositol 3-phosphate; different complex forms are believed to play a role in multiple membrane trafficking pathways: PI3KC3-C1 is involved in initiation of autophagosomes and PI3KC3-C2 in maturation of autophagosomes and endocytosis. Involved in regulation of degradative endocytic trafficking and cytokinesis, probably in the context of PI3KC3-C2. This is Phosphoinositide 3-kinase regulatory subunit 4 (Pik3r4) from Mus musculus (Mouse).